The following is a 264-amino-acid chain: [LysW]-aminoadipate/[LysW]-glutamate kinase (264 aa).

Substrate contacts are provided by residues glycine 35 to glycine 36, arginine 62, and asparagine 167.

Belongs to the acetylglutamate kinase family. LysZ subfamily.

The protein resides in the cytoplasm. The catalysed reaction is [amino-group carrier protein]-C-terminal-N-(1,4-dicarboxybutan-1-yl)-L-glutamine + ATP = [amino-group carrier protein]-C-terminal-N-(1-carboxy-5-phosphooxy-5-oxopentan-1-yl)-L-glutamine + ADP. It catalyses the reaction [amino-group carrier protein]-C-terminal-gamma-(L-glutamyl)-L-glutamate + ATP = [amino-group carrier protein]-C-terminal-gamma-(5-phospho-L-glutamyl)-L-glutamate + ADP. Its pathway is amino-acid biosynthesis; L-lysine biosynthesis via AAA pathway; L-lysine from L-alpha-aminoadipate (Thermus route): step 2/5. The protein operates within amino-acid biosynthesis; L-arginine biosynthesis. Functionally, involved in both the arginine and lysine biosynthetic pathways. Phosphorylates the LysW-bound precursors glutamate (for arginine biosynthesis), respectively alpha-aminoadipate (for lysine biosynthesis). In Saccharolobus islandicus (strain Y.N.15.51 / Yellowstone #2) (Sulfolobus islandicus), this protein is [LysW]-aminoadipate/[LysW]-glutamate kinase.